The primary structure comprises 541 residues: Atlastin-3 (541 aa).

The interval 1 to 25 (MLSPQRVAAAASRGADDAMESSKPG) is N-terminal hypervariable region (HVR). Residues 1–445 (MLSPQRVAAA…NVFSTFRTPA (445 aa)) lie on the Cytoplasmic side of the membrane. One can recognise a GB1/RHD3-type G domain in the interval 57 to 305 (DLDVVVVSVA…LIPYVLNPSK (249 aa)). Arg-70, Lys-71, Gly-72, Lys-73, Ser-74, Phe-75, and Arg-109 together coordinate GDP. A Mg(2+)-binding site is contributed by Asp-142. Residues Arg-213, Asp-214, Val-272, and Ser-275 each coordinate GDP. A 3HB (three-helix bundle) domain region spans residues 343-434 (MLQATAEANN…YENFCKHNGS (92 aa)). Lys-391 carries the post-translational modification N6-acetyllysine. Residues 446 to 466 (VLFTGIVALYIASGLTGFIGL) form a helical membrane-spanning segment. Position 467 (Glu-467) is a topological domain, lumenal. The chain crosses the membrane as a helical span at residues 468-488 (VVAQLFNCMVGLLLIALLTWG). Residues 489–541 (YIRYSGQYRELGGAIDFGAAYVLEQASSHIGNSTQATVRDAVVGRPSMDKKAQ) lie on the Cytoplasmic side of the membrane. Phosphoserine is present on Ser-535.

The protein belongs to the TRAFAC class dynamin-like GTPase superfamily. GB1/RHD3 GTPase family. GB1 subfamily. Monomeric and homodimeric. The homodimer, transiently formed by two molecules on opposing membranes, is the active form mediating ER membrane fusion. Interacts with ZFYVE27; both proteins are involved in endoplasmic reticulum tubular network organization. Interacts with REEP5; both proteins are involved in endoplasmic reticulum tubular network organization. As to expression, expressed in the central nervous system and in dorsal root ganglia neurons. Expressed in peripheral tissues (at protein level).

It is found in the endoplasmic reticulum membrane. It carries out the reaction GTP + H2O = GDP + phosphate + H(+). Functionally, atlastin-3 (ATL3) is a membrane-anchored GTPase that mediates the GTP-dependent fusion of endoplasmic reticulum (ER) membranes, maintaining the continuous ER network. It facilitates the formation of three-way junctions where ER tubules intersect. Two atlastin-3 on neighboring ER tubules bind GTP and form loose homodimers through the GB1/RHD3-type G domains and 3HB regions. Upon GTP hydrolysis, the 3HB regions tighten, pulling the membranes together to drive their fusion. After fusion, the homodimer disassembles upon release of inorganic phosphate (Pi). Subsequently, GDP dissociates, resetting the monomers to a conformation ready for a new fusion cycle. The protein is Atlastin-3 of Homo sapiens (Human).